Reading from the N-terminus, the 658-residue chain is Scarecrow-like protein 28 (658 aa).

3 disordered regions span residues 43–85, 96–115, and 209–265; these read PCSS…TSGC, LATTRGNGEGFSWNNDNNNR, and PAAV…NNNR. Positions 214-228 are enriched in low complexity; sequence EASGGSSTSASSESR. The GRAS domain occupies 265-654; it reads RNDLQRDFEL…QPLYTISAWT (390 aa). Residues 272–336 are leucine repeat I (LRI); it reads FELVNLLTGC…VARMWPHIFH (65 aa). The tract at residues 355–420 is VHIID; that stretch reads LRFLNQVTPI…NPPHHVRITG (66 aa). The VHIID motif lies at 386–390; it reads VHIID. Residues 430-462 form a leucine repeat II (LRII) region; it reads ETGDRLHGFAEAMNLQFEFHPVVDRLEDVRLWM. Positions 471–563 are PFYRE; sequence VAVNCVMQMH…EMLFGREIRN (93 aa). The tract at residues 566–654 is SAW; the sequence is ACEGSHRQER…QPLYTISAWT (89 aa).

The protein belongs to the GRAS family. As to quaternary structure, interacts with SNRNP35 and CYP95. In terms of tissue distribution, expressed in roots and sepals.

The protein localises to the nucleus. In terms of biological role, probable transcription factor involved in plant development. The sequence is that of Scarecrow-like protein 28 (SCL28) from Arabidopsis thaliana (Mouse-ear cress).